The chain runs to 73 residues: Conotoxin reg3a (73 aa).

Positions 1–20 (MMSKLRVLLTICLLLFPLSA) are cleaved as a signal peptide. The propeptide occupies 21–55 (LPLDGDQPADQPAKRMWNGKLAARKPRFDKYDLVR). 4-hydroxyproline occurs at positions 59, 60, 65, and 70. Cys72 bears the Cysteine amide mark.

In terms of processing, contains 3 disulfide bonds. Expressed by the venom duct.

It localises to the secreted. The protein is Conotoxin reg3a of Conus regius (Crown cone).